The following is a 297-amino-acid chain: Cytidine deaminase (297 aa).

CMP/dCMP-type deaminase domains are found at residues 50–170 and 189–297; these read SDKE…FGPK and ETES…YASL. 91–93 is a binding site for substrate; the sequence is NME. His104 contacts Zn(2+). The active-site Proton donor is Glu106. Zn(2+) contacts are provided by Cys131 and Cys134.

It belongs to the cytidine and deoxycytidylate deaminase family. As to quaternary structure, homodimer. Zn(2+) serves as cofactor.

The catalysed reaction is cytidine + H2O + H(+) = uridine + NH4(+). It catalyses the reaction 2'-deoxycytidine + H2O + H(+) = 2'-deoxyuridine + NH4(+). In terms of biological role, this enzyme scavenges exogenous and endogenous cytidine and 2'-deoxycytidine for UMP synthesis. The sequence is that of Cytidine deaminase from Aliivibrio fischeri (strain ATCC 700601 / ES114) (Vibrio fischeri).